The sequence spans 82 residues: RNA-binding protein Hfq (82 aa).

The region spanning 9 to 69 (DHFLNQLRKE…ISTFSPARNV (61 aa)) is the Sm domain.

Belongs to the Hfq family. In terms of assembly, homohexamer.

Functionally, RNA chaperone that binds small regulatory RNA (sRNAs) and mRNAs to facilitate mRNA translational regulation in response to envelope stress, environmental stress and changes in metabolite concentrations. Also binds with high specificity to tRNAs. In Exiguobacterium sp. (strain ATCC BAA-1283 / AT1b), this protein is RNA-binding protein Hfq.